We begin with the raw amino-acid sequence, 394 residues long: F-box protein At2g17830 (394 aa).

An F-box domain is found at Met-1–Gln-47.

The chain is F-box protein At2g17830 from Arabidopsis thaliana (Mouse-ear cress).